The following is a 163-amino-acid chain: Nucleotide-binding protein CYA_0935 (163 aa).

The protein belongs to the YajQ family.

Functionally, nucleotide-binding protein. The chain is Nucleotide-binding protein CYA_0935 from Synechococcus sp. (strain JA-3-3Ab) (Cyanobacteria bacterium Yellowstone A-Prime).